Consider the following 465-residue polypeptide: 6-phospho-beta-glucosidase GmuD (465 aa).

The Proton donor role is filled by glutamate 170. Residue glutamate 368 is the Nucleophile of the active site.

The protein belongs to the glycosyl hydrolase 1 family.

It catalyses the reaction 6-phospho-beta-D-glucosyl-(1-&gt;4)-D-glucose + H2O = D-glucose 6-phosphate + D-glucose. In terms of biological role, phospho-beta-D-glucosidase that seems to be involved in the degradation of glucomannan. Is also capable of hydrolyzing aryl-phospho-beta-D-glucosides, although very weakly, and plays only a minor role, if any, in the degradation of these substrates in vivo. The protein is 6-phospho-beta-glucosidase GmuD (gmuD) of Bacillus subtilis (strain 168).